A 216-amino-acid polypeptide reads, in one-letter code: MQLGMSSTKMKSLLKGLRYISQVFAIEGEKEEEMQIGNPTDVKHVAHIGWDGPSDNATAPSWMNDFKSSPVMESIQGLGEDDSSVKCQSEFGGRTRDLPKLPKSTRKSSSEKGSPTKERSDKTKRRTSNKGTSSSRRTKDEDSTSSSRRTTKDEDSSLSQHSAGLPEVPKKSKRKKSKEAGNGGSSRSSRISEADYMSDTGSDRSMPQFEDDRNGF.

A CRIB domain is found at 36-49 (IGNPTDVKHVAHIG). Residues 52 to 216 (GPSDNATAPS…PQFEDDRNGF (165 aa)) form a disordered region. A compositionally biased stretch (basic and acidic residues) spans 108 to 121 (SSSEKGSPTKERSD).

Interacts with ARAC4/ROP2 and ARAC11/ROP1. As to expression, expressed in roots, leaves, guard cells, stems, flowers, siliques and pollen.

The protein localises to the nucleus. Its subcellular location is the cytoplasm. The protein resides in the cell membrane. Its function is as follows. Functions as a downstream effector of Rho-related GTP binding proteins of the 'Rho of Plants' (ROPs) family. Participates in the propagation of ROP GTPase signals in specific cellular responses. Functions as a downstream effector of active ARAC4/ROP2 GTPase which is involved in the prevention of excessive stomatal opening upon light stimulation. Is involved in pollen tube growth regulation through its interaction with ARAC11/ROP1. The chain is CRIB domain-containing protein RIC7 (RIC7) from Arabidopsis thaliana (Mouse-ear cress).